Consider the following 491-residue polypeptide: Putative F-box/LRR-repeat protein At3g59230 (491 aa).

An F-box domain is found at 11–57; that stretch reads KDIINSLPEALIYHILSFLSTKEAAITSLLSRKWRYFFAFVPNLDFD. 7 LRR repeats span residues 127–154, 156–182, 184–209, 325–351, 352–377, 419–444, and 472–491; these read LSIA…RIEA, NGLA…YLDS, ELDY…VMID, ASTV…TIES, NTKV…VFQG, NDKT…NIYY, and VQVI…SSSI.

This Arabidopsis thaliana (Mouse-ear cress) protein is Putative F-box/LRR-repeat protein At3g59230.